A 293-amino-acid polypeptide reads, in one-letter code: Phosphate import ATP-binding protein PstB (293 aa).

Residues 46–288 (MTCRKVDVHY…PGHQLTEDYI (243 aa)) form the ABC transporter domain. Residue 78–85 (GPSGCGKS) coordinates ATP.

This sequence belongs to the ABC transporter superfamily. Phosphate importer (TC 3.A.1.7) family. In terms of assembly, the complex is composed of two ATP-binding proteins (PstB), two transmembrane proteins (PstC and PstA) and a solute-binding protein (PstS).

It localises to the cell inner membrane. It catalyses the reaction phosphate(out) + ATP + H2O = ADP + 2 phosphate(in) + H(+). Functionally, part of the ABC transporter complex PstSACB involved in phosphate import. Responsible for energy coupling to the transport system. The sequence is that of Phosphate import ATP-binding protein PstB from Desulfotalea psychrophila (strain LSv54 / DSM 12343).